We begin with the raw amino-acid sequence, 120 residues long: Holo-[acyl-carrier-protein] synthase (120 aa).

Mg(2+)-binding residues include Asp8 and Glu58.

It belongs to the P-Pant transferase superfamily. AcpS family. Requires Mg(2+) as cofactor.

Its subcellular location is the cytoplasm. It catalyses the reaction apo-[ACP] + CoA = holo-[ACP] + adenosine 3',5'-bisphosphate + H(+). Transfers the 4'-phosphopantetheine moiety from coenzyme A to a Ser of acyl-carrier-protein. The chain is Holo-[acyl-carrier-protein] synthase from Streptococcus pneumoniae (strain Hungary19A-6).